The sequence spans 523 residues: Cilia- and flagella-associated protein 157 (523 aa).

Residues 1-31 (MAPKKKPNKGGKEMQGKKIGGKKDASGTKTP) form a disordered region. Residues 10–26 (GGKEMQGKKIGGKKDAS) show a composition bias toward basic and acidic residues. At threonine 30 the chain carries Phosphothreonine. Coiled coils occupy residues 32-191 (ELAM…LEKK), 248-274 (VQLL…LENT), and 302-371 (GTEE…VLIQ). Residues 419–440 (QPDMGSHQDKQPQGLSKESQRI) are disordered. Residues 429 to 440 (QPQGLSKESQRI) show a composition bias toward polar residues.

It belongs to the CFAP157 family. Interacts with TUBB and TUBA4A. Interacts with CEP350. Specifically expressed in tissues containing motile cilia.

It is found in the cytoplasm. It localises to the cytoskeleton. The protein resides in the cilium basal body. Functionally, specifically required during spermatogenesis for flagellum morphogenesis and sperm motility. May be required to suppress the formation of supernumerary axonemes and ensure a correct ultrastructure. This chain is Cilia- and flagella-associated protein 157, found in Mus musculus (Mouse).